Here is a 465-residue protein sequence, read N- to C-terminus: Probable Xaa-Pro aminopeptidase pepP (465 aa).

Aspartate 263, aspartate 274, glutamate 397, and glutamate 437 together coordinate Mn(2+).

It belongs to the peptidase M24B family. It depends on Mn(2+) as a cofactor.

The catalysed reaction is Release of any N-terminal amino acid, including proline, that is linked to proline, even from a dipeptide or tripeptide.. Functionally, catalyzes the removal of a penultimate prolyl residue from the N-termini of peptides. This chain is Probable Xaa-Pro aminopeptidase pepP (pepP), found in Emericella nidulans (strain FGSC A4 / ATCC 38163 / CBS 112.46 / NRRL 194 / M139) (Aspergillus nidulans).